The primary structure comprises 413 residues: Serine hydroxymethyltransferase (413 aa).

Residues L119 and 123-125 contribute to the (6S)-5,6,7,8-tetrahydrofolate site; that span reads GHL. K228 carries the post-translational modification N6-(pyridoxal phosphate)lysine.

This sequence belongs to the SHMT family. In terms of assembly, homodimer. Requires pyridoxal 5'-phosphate as cofactor.

It is found in the cytoplasm. The catalysed reaction is (6R)-5,10-methylene-5,6,7,8-tetrahydrofolate + glycine + H2O = (6S)-5,6,7,8-tetrahydrofolate + L-serine. The protein operates within one-carbon metabolism; tetrahydrofolate interconversion. It participates in amino-acid biosynthesis; glycine biosynthesis; glycine from L-serine: step 1/1. Its function is as follows. Catalyzes the reversible interconversion of serine and glycine with tetrahydrofolate (THF) serving as the one-carbon carrier. This reaction serves as the major source of one-carbon groups required for the biosynthesis of purines, thymidylate, methionine, and other important biomolecules. Also exhibits THF-independent aldolase activity toward beta-hydroxyamino acids, producing glycine and aldehydes, via a retro-aldol mechanism. This is Serine hydroxymethyltransferase from Caldanaerobacter subterraneus subsp. tengcongensis (strain DSM 15242 / JCM 11007 / NBRC 100824 / MB4) (Thermoanaerobacter tengcongensis).